The following is a 300-amino-acid chain: NAD kinase (300 aa).

Catalysis depends on aspartate 75, which acts as the Proton acceptor. Residues aspartate 75–glycine 76, asparagine 149–aspartate 150, arginine 177, aspartate 179, threonine 190–serine 195, alanine 214, and glutamine 248 contribute to the NAD(+) site.

It belongs to the NAD kinase family. A divalent metal cation is required as a cofactor.

It localises to the cytoplasm. The catalysed reaction is NAD(+) + ATP = ADP + NADP(+) + H(+). Involved in the regulation of the intracellular balance of NAD and NADP, and is a key enzyme in the biosynthesis of NADP. Catalyzes specifically the phosphorylation on 2'-hydroxyl of the adenosine moiety of NAD to yield NADP. The sequence is that of NAD kinase from Burkholderia cenocepacia (strain ATCC BAA-245 / DSM 16553 / LMG 16656 / NCTC 13227 / J2315 / CF5610) (Burkholderia cepacia (strain J2315)).